Consider the following 275-residue polypeptide: Large ribosomal subunit protein uL2 (275 aa).

The span at 28–38 (EPYAPLLDKKS) shows a compositional bias: basic and acidic residues. Disordered stretches follow at residues 28–55 (EPYAPLLDKKSKSGGRNNTGRITTRHVG) and 224–258 (AMNPVDHPHGGGEGRTSGGRHPVSPWGIPTKGYKT).

This sequence belongs to the universal ribosomal protein uL2 family. In terms of assembly, part of the 50S ribosomal subunit. Forms a bridge to the 30S subunit in the 70S ribosome.

In terms of biological role, one of the primary rRNA binding proteins. Required for association of the 30S and 50S subunits to form the 70S ribosome, for tRNA binding and peptide bond formation. It has been suggested to have peptidyltransferase activity; this is somewhat controversial. Makes several contacts with the 16S rRNA in the 70S ribosome. The polypeptide is Large ribosomal subunit protein uL2 (Cellvibrio japonicus (strain Ueda107) (Pseudomonas fluorescens subsp. cellulosa)).